Reading from the N-terminus, the 248-residue chain is Protein maestro (248 aa).

A disordered region spans residues 1-20 (MDQRQRRILGQPLSIPTSQP). 2 HEAT repeats span residues 44-79 (EPLK…AREA) and 128-163 (SFFI…AAFA).

It is found in the nucleus. It localises to the nucleolus. This is Protein maestro (MRO) from Macaca fascicularis (Crab-eating macaque).